We begin with the raw amino-acid sequence, 157 residues long: Protein Smg (157 aa).

It belongs to the Smg family.

This Buchnera aphidicola subsp. Acyrthosiphon pisum (strain 5A) protein is Protein Smg.